Consider the following 649-residue polypeptide: Epithelial sodium channel subunit gamma (649 aa).

Residues 1–55 (MAPGEKIKAKIKKNLPVTGPQAPTIKELMRWYCLNTNTHGCRRIVVSRGRLRRLL) are Cytoplasmic-facing. Residues 56–76 (WIGFTLTAVALILWQCALLVF) form a helical membrane-spanning segment. The Extracellular portion of the chain corresponds to 77-541 (SFYTVSVSIK…GGQLGLWMSC (465 aa)). Intrachain disulfides connect C100–C283, C207–C214, C260–C267, C372–C457, C394–C453, C398–C449, C407–C434, and C409–C423. The segment at 135-221 (RKRREAESWN…SDCATYTFSS (87 aa)) is gating release of inhibition by proteolysis (GRIP); protease-sensitive region that is responsible for the proteolytic activation of the channel. An N-linked (GlcNAc...) asparagine glycan is attached at N209. N-linked (GlcNAc...) asparagine glycosylation occurs at N497. Residues 542-562 (SVVCVIEIIEVFFIDFFSIIA) form a helical membrane-spanning segment. Residues 563–649 (RRQWQKAKEW…LTDTQMLDEL (87 aa)) are Cytoplasmic-facing. Residues 623-627 (PPPKY) carry the PY motif; recruits WW domain-containing proteins and is thereby required for ubiquitination and inhibition of the channel by NEDD4 and NEDD4L motif.

It belongs to the amiloride-sensitive sodium channel (TC 1.A.6) family. SCNN1G subfamily. In terms of assembly, component of the heterotrimeric epithelial sodium channel (ENaC) composed of an alpha/SCNN1A, a beta/SCNN1B and a gamma/SCNN1G subunit. An additional delta/SCNN1D subunit can replace the alpha/SCNN1A subunit to form an alternative channel with specific properties. Interacts with WWP1 (via WW domains). Interacts with WWP2 (via WW domains); inhibits the channel. Interacts with the full-length immature form of PCSK9 (pro-PCSK9); inhibits ENaC by promoting its proteasomal degradation. Interacts with BPIFA1; the interaction is indirect via SCNN1B and inhibits the proteolytic maturation of SCNN1A and SCNN1G and the activation of ENaC. Post-translationally, phosphorylated on serine and threonine residues. Aldosterone and insulin increase the basal level of phosphorylation. Ubiquitinated. Can be ubiquitinated at multiple sites and undergo monoubiquitination and polyubiquitination. Ubiquitination by NEDD4 or NEDD4L inhibits the ENaC channel through endocytosis, intracellular retention and degradation of its individual subunits. In terms of processing, ENaC is activated through the proteolytic maturation of its subunits. Furin cleaves the SCNN1G subunit first, followed by cleavage by prostasin (PRSS8), which results in a stepwise increase in the open probability of the channel due to the release of an inhibitory tract. BPIFA1, which is recruited by the SCNN1B subunit, prevents the proteolytic activation of ENaC. Post-translationally, N-glycosylated. N-linked glycans are processed to complex type during ENaC complex assembly and transport to the plasma membrane. As to expression, expressed in kidney (at protein level).

It localises to the apical cell membrane. It carries out the reaction Na(+)(in) = Na(+)(out). With respect to regulation, originally identified and characterized by its inhibition by the diuretic drug amiloride. Its function is as follows. This is one of the three pore-forming subunits of the heterotrimeric epithelial sodium channel (ENaC), a critical regulator of sodium balance and fluid homeostasis. ENaC operates in epithelial tissues, where it mediates the electrodiffusion of sodium ions from extracellular fluid through the apical membrane of cells, with water following osmotically. It plays a key role in maintaining sodium homeostasis through electrogenic sodium reabsorption in the kidneys. Additionally, ENaC is essential for airway surface liquid homeostasis, which is crucial for proper mucus clearance. The polypeptide is Epithelial sodium channel subunit gamma (Homo sapiens (Human)).